Reading from the N-terminus, the 246-residue chain is 1-(5-phosphoribosyl)-5-[(5-phosphoribosylamino)methylideneamino] imidazole-4-carboxamide isomerase (246 aa).

Residue D8 is the Proton acceptor of the active site. The active-site Proton donor is the D131.

The protein belongs to the HisA/HisF family.

It localises to the cytoplasm. The catalysed reaction is 1-(5-phospho-beta-D-ribosyl)-5-[(5-phospho-beta-D-ribosylamino)methylideneamino]imidazole-4-carboxamide = 5-[(5-phospho-1-deoxy-D-ribulos-1-ylimino)methylamino]-1-(5-phospho-beta-D-ribosyl)imidazole-4-carboxamide. Its pathway is amino-acid biosynthesis; L-histidine biosynthesis; L-histidine from 5-phospho-alpha-D-ribose 1-diphosphate: step 4/9. This is 1-(5-phosphoribosyl)-5-[(5-phosphoribosylamino)methylideneamino] imidazole-4-carboxamide isomerase from Polaromonas sp. (strain JS666 / ATCC BAA-500).